The following is a 114-amino-acid chain: T cell receptor beta variable 6-2 (114 aa).

The N-terminal stretch at 1–21 (MSLGLLCCGAFSLLWAGPVNA) is a signal peptide. The Ig-like domain occupies 22–114 (GVTQTPKFRV…TSVYFCASSY (93 aa)). Cysteine 42 and cysteine 110 are disulfide-bonded. N-linked (GlcNAc...) asparagine glycosylation occurs at asparagine 84.

Alpha-beta TR is a heterodimer composed of an alpha and beta chain; disulfide-linked. The alpha-beta TR is associated with the transmembrane signaling CD3 coreceptor proteins to form the TR-CD3 (TcR or TCR). The assembly of alpha-beta TR heterodimers with CD3 occurs in the endoplasmic reticulum where a single alpha-beta TR heterodimer associates with one CD3D-CD3E heterodimer, one CD3G-CD3E heterodimer and one CD247 homodimer forming a stable octameric structure. CD3D-CD3E and CD3G-CD3E heterodimers preferentially associate with TR alpha and TR beta chains, respectively. The association of the CD247 homodimer is the last step of TcR assembly in the endoplasmic reticulum and is required for transport to the cell surface.

The protein resides in the cell membrane. V region of the variable domain of T cell receptor (TR) beta chain that participates in the antigen recognition. Alpha-beta T cell receptors are antigen specific receptors which are essential to the immune response and are present on the cell surface of T lymphocytes. Recognize peptide-major histocompatibility (MH) (pMH) complexes that are displayed by antigen presenting cells (APC), a prerequisite for efficient T cell adaptive immunity against pathogens. Binding of alpha-beta TR to pMH complex initiates TR-CD3 clustering on the cell surface and intracellular activation of LCK that phosphorylates the ITAM motifs of CD3G, CD3D, CD3E and CD247 enabling the recruitment of ZAP70. In turn ZAP70 phosphorylates LAT, which recruits numerous signaling molecules to form the LAT signalosome. The LAT signalosome propagates signal branching to three major signaling pathways, the calcium, the mitogen-activated protein kinase (MAPK) kinase and the nuclear factor NF-kappa-B (NF-kB) pathways, leading to the mobilization of transcription factors that are critical for gene expression and essential for T cell growth and differentiation. The T cell repertoire is generated in the thymus, by V-(D)-J rearrangement. This repertoire is then shaped by intrathymic selection events to generate a peripheral T cell pool of self-MH restricted, non-autoaggressive T cells. Post-thymic interaction of alpha-beta TR with the pMH complexes shapes TR structural and functional avidity. The chain is T cell receptor beta variable 6-2 from Homo sapiens (Human).